The sequence spans 873 residues: Leucine--tRNA ligase (873 aa).

A 'HIGH' region motif is present at residues 42-52; the sequence is PYPSGKLHMGH. Residues 624–643 form a disordered region; the sequence is PVEIGGTEKMSKSKNNGVDP. The short motif at 632–636 is the 'KMSKS' region element; sequence KMSKS. ATP is bound at residue Lys-635.

The protein belongs to the class-I aminoacyl-tRNA synthetase family.

It localises to the cytoplasm. The catalysed reaction is tRNA(Leu) + L-leucine + ATP = L-leucyl-tRNA(Leu) + AMP + diphosphate. This Pseudomonas aeruginosa (strain ATCC 15692 / DSM 22644 / CIP 104116 / JCM 14847 / LMG 12228 / 1C / PRS 101 / PAO1) protein is Leucine--tRNA ligase.